Reading from the N-terminus, the 132-residue chain is ATP synthase epsilon chain 1 (132 aa).

The protein belongs to the ATPase epsilon chain family. F-type ATPases have 2 components, CF(1) - the catalytic core - and CF(0) - the membrane proton channel. CF(1) has five subunits: alpha(3), beta(3), gamma(1), delta(1), epsilon(1). CF(0) has three main subunits: a, b and c.

It is found in the cell inner membrane. Produces ATP from ADP in the presence of a proton gradient across the membrane. In Cereibacter sphaeroides (strain ATCC 17023 / DSM 158 / JCM 6121 / CCUG 31486 / LMG 2827 / NBRC 12203 / NCIMB 8253 / ATH 2.4.1.) (Rhodobacter sphaeroides), this protein is ATP synthase epsilon chain 1.